Consider the following 688-residue polypeptide: ATP-dependent zinc metalloprotease FTSH 6, chloroplastic (688 aa).

The transit peptide at 1 to 75 (MKMASSSSAL…GFTSALGTVL (75 aa)) directs the protein to the chloroplast. Positions 25-36 (QQFQKPASLSKS) are enriched in polar residues. The tract at residues 25–44 (QQFQKPASLSKSSHTHKPSL) is disordered. The transit peptide at 76–83 (AHPAKAEP) directs the protein to the thylakoid. Over 84 to 168 (EAPIEATSNR…AHPMNVNWGA (85 aa)) the chain is Lumenal, thylakoid. The chain crosses the membrane as a helical span at residues 169–189 (FLLNFLGNLGFPLILLVSLLL). Residues 190 to 688 (TSSSRRNPAG…RIRINDLISV (499 aa)) are Stromal-facing. Position 264-271 (264-271 (GPPGTGKT)) interacts with ATP. Histidine 485 is a binding site for Zn(2+). Glutamate 486 is a catalytic residue. Zn(2+)-binding residues include histidine 489 and aspartate 563.

It in the N-terminal section; belongs to the AAA ATPase family. The protein in the C-terminal section; belongs to the peptidase M41 family. Zn(2+) serves as cofactor.

The protein resides in the plastid. The protein localises to the chloroplast thylakoid membrane. Functionally, probable ATP-dependent zinc metallopeptidase. Involved in the degradation of the light-harvesting complex of photosystem II (LHC II) during senescence or high light acclimation. In Arabidopsis thaliana (Mouse-ear cress), this protein is ATP-dependent zinc metalloprotease FTSH 6, chloroplastic (FTSH6).